The chain runs to 485 residues: 4-alpha-glucanotransferase (485 aa).

Belongs to the disproportionating enzyme family.

The protein resides in the cytoplasm. The catalysed reaction is Transfers a segment of a (1-&gt;4)-alpha-D-glucan to a new position in an acceptor, which may be glucose or a (1-&gt;4)-alpha-D-glucan.. This chain is 4-alpha-glucanotransferase (malQ), found in Aquifex aeolicus (strain VF5).